A 109-amino-acid polypeptide reads, in one-letter code: Glutaredoxin-8 (109 aa).

Residues 5 to 109 (VTKAEEMIKS…EELTKIGLLP (105 aa)) form the Glutaredoxin domain. C25 and C28 are disulfide-bonded.

This sequence belongs to the glutaredoxin family. As to quaternary structure, monomer.

The protein resides in the cytoplasm. Glutathione-dependent oxidoreductase with lower activity compared to the other members of the glutaredoxin family. The disulfide bond functions as an electron carrier in the glutathione-dependent synthesis of deoxyribonucleotides by the enzyme ribonucleotide reductase. This Saccharomyces cerevisiae (strain ATCC 204508 / S288c) (Baker's yeast) protein is Glutaredoxin-8 (GRX8).